Reading from the N-terminus, the 529-residue chain is Cytochrome P450 monooxygenase atmQ (529 aa).

Transmembrane regions (helical) follow at residues tyrosine 22 to alanine 42 and serine 51 to phenylalanine 71. Cysteine 467 is a heme binding site.

It belongs to the cytochrome P450 family. Heme is required as a cofactor.

It is found in the membrane. It functions in the pathway secondary metabolite biosynthesis. Cytochrome P450 monooxygenase; part of the ATM2 gene cluster that mediates the biosynthesis of aflatrem, a tremorgenic mycotoxin with acute neurotoxic effects. Synthesis of geranylgeranyl diphosphate (GGPP) by AtmG (a GGPP synthase) precedes condensation of GGPP with indole 3-glycerol phosphate, followed by epoxidation and cyclization by AtmM (a FAD-dependent monooxygenase) and AtmC (a prenyltransferase) to produce paspaline. AtmB is also essential for paspaline production, but its exact role has not been identified yet. AtmP, a cytochrome P450 monooxygenase, subsequently converts paspaline to 13-desoxypaxilline via PC-M6 by removal of the C-30 methyl group and oxidation at C-10. AtmQ, a cytochrome P450 monooxygenase, then catalyzes the oxidation of 13-desoxypaxilline, first at C-7 to produce paspalicine and then at C-13 to form paspalinine. Finally, AtmD prenylates paspalinine to form aflatrem. This chain is Cytochrome P450 monooxygenase atmQ, found in Aspergillus flavus.